We begin with the raw amino-acid sequence, 476 residues long: Probable cytosolic Fe-S cluster assembly factor GH10760 (476 aa).

Residues cysteine 23, cysteine 68, cysteine 71, cysteine 74, cysteine 187, cysteine 243, cysteine 395, and cysteine 399 each coordinate [4Fe-4S] cluster.

Belongs to the NARF family.

Functionally, component of the cytosolic iron-sulfur (Fe/S) protein assembly machinery. Required for maturation of extramitochondrial Fe/S proteins. This Drosophila grimshawi (Hawaiian fruit fly) protein is Probable cytosolic Fe-S cluster assembly factor GH10760.